Reading from the N-terminus, the 435-residue chain is NADH-quinone oxidoreductase subunit D 2 (435 aa).

The protein belongs to the complex I 49 kDa subunit family. In terms of assembly, NDH-1 is composed of 14 different subunits. Subunits NuoB, C, D, E, F, and G constitute the peripheral sector of the complex.

The protein resides in the cell inner membrane. It catalyses the reaction a quinone + NADH + 5 H(+)(in) = a quinol + NAD(+) + 4 H(+)(out). Its function is as follows. NDH-1 shuttles electrons from NADH, via FMN and iron-sulfur (Fe-S) centers, to quinones in the respiratory chain. The immediate electron acceptor for the enzyme in this species is believed to be ubiquinone. Couples the redox reaction to proton translocation (for every two electrons transferred, four hydrogen ions are translocated across the cytoplasmic membrane), and thus conserves the redox energy in a proton gradient. This is NADH-quinone oxidoreductase subunit D 2 from Stenotrophomonas maltophilia (strain R551-3).